The sequence spans 133 residues: MSWQTYVDDHLMVDFEGQGQHLAAAAILGHDGSVWAQSPHFPKFKPEEITNIMKDFDEPGFLAPTGLFLAGIKYMVIQGEPGAVIRGKKGSGGITIKKTNQALIFGLYEEPVTPGQCNMVVEKIGDYLVDQGY.

Belongs to the profilin family. Occurs in many kinds of cells as a complex with monomeric actin in a 1:1 ratio.

Its subcellular location is the cytoplasm. The protein resides in the cytoskeleton. Its function is as follows. Binds to actin and affects the structure of the cytoskeleton. At high concentrations, profilin prevents the polymerization of actin, whereas it enhances it at low concentrations. By binding to PIP2, it inhibits the formation of IP3 and DG. The protein is Profilin-3 (PRO3) of Nicotiana tabacum (Common tobacco).